A 562-amino-acid polypeptide reads, in one-letter code: Sesquiterpene synthase (562 aa).

The Mg(2+) site is built by Asp-315, Asp-319, and Glu-467. A DDXXD motif motif is present at residues 315–319 (DDIYD).

It belongs to the terpene synthase family. Tpsa subfamily. The cofactor is Mg(2+). Mn(2+) is required as a cofactor.

In terms of biological role, catalyzes the formation of beta-elemol, guaiol and bulnesol. The chain is Sesquiterpene synthase from Santalum spicatum (Australian sandalwood).